Here is a 559-residue protein sequence, read N- to C-terminus: Glucose-6-phosphate isomerase 4 (559 aa).

Catalysis depends on glutamate 356, which acts as the Proton donor. Residues histidine 387 and lysine 513 contribute to the active site.

It belongs to the GPI family.

The protein localises to the cytoplasm. It carries out the reaction alpha-D-glucose 6-phosphate = beta-D-fructose 6-phosphate. Its pathway is carbohydrate biosynthesis; gluconeogenesis. It participates in carbohydrate degradation; glycolysis; D-glyceraldehyde 3-phosphate and glycerone phosphate from D-glucose: step 2/4. In terms of biological role, catalyzes the reversible isomerization of glucose-6-phosphate to fructose-6-phosphate. This is Glucose-6-phosphate isomerase 4 from Rhodococcus jostii (strain RHA1).